The chain runs to 279 residues: Diaminopimelate epimerase (279 aa).

Residues Asn11 and Asn72 each contribute to the substrate site. Cys81 serves as the catalytic Proton donor. Substrate is bound by residues 82–83 (GN), Asn187, and 205–206 (ER). The Proton acceptor role is filled by Cys215. 216 to 217 (GT) lines the substrate pocket.

The protein belongs to the diaminopimelate epimerase family. As to quaternary structure, homodimer.

It is found in the cytoplasm. It carries out the reaction (2S,6S)-2,6-diaminopimelate = meso-2,6-diaminopimelate. The protein operates within amino-acid biosynthesis; L-lysine biosynthesis via DAP pathway; DL-2,6-diaminopimelate from LL-2,6-diaminopimelate: step 1/1. Functionally, catalyzes the stereoinversion of LL-2,6-diaminopimelate (L,L-DAP) to meso-diaminopimelate (meso-DAP), a precursor of L-lysine and an essential component of the bacterial peptidoglycan. The chain is Diaminopimelate epimerase from Aquifex aeolicus (strain VF5).